The chain runs to 335 residues: 2-acylglycerol O-acyltransferase 1 (335 aa).

Helical transmembrane passes span 18–38 (TVAVLQWVLKYLLLGPMSIGI) and 40–60 (VMLIIHNYLFLYIPYLMWLYF). 2 N-linked (GlcNAc...) asparagine glycosylation sites follow: N121 and N125. A helical transmembrane segment spans residues 132–152 (LFPGFTSYLHVLPLWFWCPVF). A glycan (N-linked (GlcNAc...) asparagine) is linked at N180.

It belongs to the diacylglycerol acyltransferase family. Expressed in stomach and liver.

Its subcellular location is the endoplasmic reticulum membrane. The enzyme catalyses a 2-acylglycerol + an acyl-CoA = a 1,2-diacylglycerol + CoA. It carries out the reaction 2-(9Z-octadecenoyl)-glycerol + butanoyl-CoA = 1-butanoyl-2-(9Z-octadecenoyl)-glycerol + CoA. It catalyses the reaction 2-(9Z-octadecenoyl)-glycerol + octanoyl-CoA = 1-octanoyl-2-(9Z-octadecenoyl)-glycerol + CoA. The catalysed reaction is 2-(9Z-octadecenoyl)-glycerol + dodecanoyl-CoA = 1-dodecanoyl-2-(9Z-octadecenoyl)-glycerol + CoA. The enzyme catalyses 2-(9Z-octadecenoyl)-glycerol + tetradecanoyl-CoA = 1-tetradecanoyl-2-(9Z-octadecenoyl)-glycerol + CoA. It carries out the reaction 2-(9Z-octadecenoyl)-glycerol + hexadecanoyl-CoA = 1-hexadecanoyl-2-(9Z-octadecenoyl)-glycerol + CoA. It catalyses the reaction 2-(9Z-octadecenoyl)-glycerol + octadecanoyl-CoA = 1-octadecanoyl-2-(9Z-octadecenoyl)-glycerol + CoA. The catalysed reaction is eicosanoyl-CoA + 2-(9Z-octadecenoyl)-glycerol = 1-eicosanoyl-2-(9Z-octadecenoyl)-glycerol + CoA. The enzyme catalyses 2-(9Z-octadecenoyl)-glycerol + (9Z)-octadecenoyl-CoA = 1,2-di-(9Z-octadecenoyl)-glycerol + CoA. It carries out the reaction 2-(9Z-octadecenoyl)-glycerol + (9Z,12Z)-octadecadienoyl-CoA = 1-(9Z,12Z-octadecadienoyl)-2-(9Z-octadecenoyl)-glycerol + CoA. It catalyses the reaction 2-(9Z-octadecenoyl)-glycerol + (5Z,8Z,11Z,14Z)-eicosatetraenoyl-CoA = 1-(5Z,8Z,11Z,14Z-eicosatetraenoyl)-2-(9Z-octadecenoyl)-glycerol + CoA. The catalysed reaction is a 2-acylglycerol + an acyl-CoA = a 1,2-diacyl-sn-glycerol + CoA. The enzyme catalyses a 2-acylglycerol + an acyl-CoA = a 2,3-diacyl-sn-glycerol + CoA. It carries out the reaction a 1-acylglycerol + an acyl-CoA = a 1,2-diacylglycerol + CoA. It catalyses the reaction 1-dodecanoylglycerol + (9Z)-octadecenoyl-CoA = 1-dodecanoyl-2-(9Z-octadecenoyl)-glycerol + CoA. The catalysed reaction is 1-tetradecanoylglycerol + (9Z)-octadecenoyl-CoA = 1-tetradecanoyl-2-(9Z-octadecenoyl)-glycerol + CoA. The enzyme catalyses 1-hexadecanoylglycerol + (9Z)-octadecenoyl-CoA = 1-hexadecanoyl-2-(9Z-octadecenoyl)-glycerol + CoA. It carries out the reaction 1-(9Z-octadecenoyl)-glycerol + (9Z)-octadecenoyl-CoA = 1,2-di-(9Z-octadecenoyl)-glycerol + CoA. It catalyses the reaction 1-(9Z,12Z-octadecadienoyl)-glycerol + (9Z)-octadecenoyl-CoA = 1-(9Z,12Z-octadecadienoyl)-2-(9Z-octadecenoyl)-glycerol + CoA. The catalysed reaction is 1-(9Z,12Z,15Z-octadecatrienoyl)-glycerol + (9Z)-octadecenoyl-CoA = 1-(9Z,12Z,15Z-octadecatrienoyl)-2-(9Z-octadecenoyl)-glycerol + CoA. The enzyme catalyses 1-(5Z,8Z,11Z,14Z-eicosatetraenoyl)-glycerol + (9Z)-octadecenoyl-CoA = 1-(5Z,8Z,11Z,14Z-eicosatetraenoyl)-2-(9Z-octadecenoyl)-glycerol + CoA. It carries out the reaction a 1-acylglycerol + an acyl-CoA = a 1,3-diacylglycerol + CoA. It catalyses the reaction 1-dodecanoylglycerol + (9Z)-octadecenoyl-CoA = 1-dodecanoyl-3-(9Z-octadecenoyl)-glycerol + CoA. The catalysed reaction is 1-hexadecanoylglycerol + (9Z)-octadecenoyl-CoA = 1-(9Z-octadecenoyl)-3-hexadecanoylglycerol + CoA. The enzyme catalyses 1-octadecanoylglycerol + (9Z)-octadecenoyl-CoA = 1-octadecanoyl-3-(9Z-octadecenoyl)-glycerol + CoA. It carries out the reaction 1-(9Z-octadecenoyl)-sn-glycerol + (9Z)-octadecenoyl-CoA = 1,3-di-(9Z-octadecenoyl)-glycerol + CoA. It catalyses the reaction 1-(9Z,12Z-octadecadienoyl)-glycerol + (9Z)-octadecenoyl-CoA = 1-(9Z-octadecenoyl)-3-(9Z,12Z-octadecadienoyl)-glycerol + CoA. The catalysed reaction is 1-(9Z,12Z,15Z-octadecatrienoyl)-glycerol + (9Z)-octadecenoyl-CoA = 1-(9Z,12Z,15Z-octadecatrienoyl)-3-(9Z-octadecenoyl)-glycerol + CoA. The enzyme catalyses a 1-acyl-sn-glycerol + an acyl-CoA = a 1,3-diacyl-sn-glycerol + CoA. It carries out the reaction a 3-acyl-sn-glycerol + an acyl-CoA = a 1,3-diacyl-sn-glycerol + CoA. It catalyses the reaction 3-octadecanoyl-sn-glycerol + (9Z)-octadecenoyl-CoA = 1-(9Z-octadecenoyl)-3-octadecanoyl-sn-glycerol + CoA. It participates in glycerolipid metabolism; triacylglycerol biosynthesis. In terms of biological role, involved in glycerolipid synthesis and lipid metabolism. Catalyzes the formation of diacylglycerol, the precursor of triacylglycerol, by transferring the acyl chain of a fatty acyl-CoA to a monoacylglycerol, mainly at the sn-1 or sn-3 positions. It uses both sn-2-monoacylglycerol (2-acylglycerol) and sn-1-monoacylglycerol (1-acyl-sn-glycerol) equally well as substrates, and uses sn-3-monoacylglycerol (3-acyl-sn-glycerol) with lower efficiency. Probably not involved in absorption of dietary fat in the small intestine. This chain is 2-acylglycerol O-acyltransferase 1, found in Homo sapiens (Human).